A 245-amino-acid polypeptide reads, in one-letter code: Adenosine 5'-phosphosulfate reductase (245 aa).

[4Fe-4S] cluster-binding residues include C124, C125, C205, and C208. The active-site Nucleophile; cysteine thiosulfonate intermediate is the C231.

It belongs to the PAPS reductase family. CysH subfamily. The cofactor is [4Fe-4S] cluster.

It localises to the cytoplasm. The catalysed reaction is [thioredoxin]-disulfide + sulfite + AMP + 2 H(+) = adenosine 5'-phosphosulfate + [thioredoxin]-dithiol. The protein operates within sulfur metabolism; hydrogen sulfide biosynthesis; sulfite from sulfate. Functionally, catalyzes the formation of sulfite from adenosine 5'-phosphosulfate (APS) using thioredoxin as an electron donor. The protein is Adenosine 5'-phosphosulfate reductase of Chelativorans sp. (strain BNC1).